A 461-amino-acid chain; its full sequence is Peptidyl-prolyl cis-trans isomerase-like 4 (461 aa).

One can recognise a PPIase cyclophilin-type domain in the interval 1 to 171; the sequence is MSVLLETSLG…KDIRIRHTVI (171 aa). Residues 205-234 are a coiled coil; sequence EELDDNMDEESMEKLRREREARAQALTLEM. The 79-residue stretch at 248 to 326 folds into the RRM domain; that stretch reads NVLFVCKLNP…HRIHVDFSQS (79 aa). The disordered stretch occupies residues 341–461; it reads KRSGQRGGFG…DERYRERRRR (121 aa). 2 stretches are compositionally biased toward basic and acidic residues: residues 365–384 and 398–461; these read DNAREKENDYTLVFDKGDKA and SNRD…RRRR.

Belongs to the cyclophilin-type PPIase family. PPIL4 subfamily.

It localises to the nucleus. It catalyses the reaction [protein]-peptidylproline (omega=180) = [protein]-peptidylproline (omega=0). Functionally, PPIases accelerate the folding of proteins. It catalyzes the cis-trans isomerization of proline imidic peptide bonds in oligopeptides. This is Peptidyl-prolyl cis-trans isomerase-like 4 (cyp6) from Aspergillus oryzae (strain ATCC 42149 / RIB 40) (Yellow koji mold).